The sequence spans 512 residues: Cytochrome P450 monooxygenase TwmD (512 aa).

Residue Cys-454 participates in heme binding.

The protein belongs to the cytochrome P450 family. Heme serves as cofactor.

Its pathway is secondary metabolite biosynthesis. In terms of biological role, cytochrome P450 monooxygenase; part of the gene cluster that mediates the biosynthesis of wortmanamides A and B, reduced long-chain polyketides amidated with a specific omega-amino acid, 5-aminopentanoic acid (5PA). The PKS modules of TwmB are involved in the synthesis of the polyketide backbone, whereas the non-canonical C domain of TwmB is a bonafide condensation domain that specifically selects 5PA and catalyzes amidation to release polyketide chain. The C domain clearly prefers C16 and C18 fatty acyl substrates, which is consistent with simultaneous formation of both octaketide and nonaketide acyl amides wortmanamides A and B. Because TwmB lacks a designated enoylreductase (ER) domain, the required activity is provided the enoyl reductase TwmE. The roles of the remaining enzymes have still to be clarified. The chain is Cytochrome P450 monooxygenase TwmD from Talaromyces wortmannii (Penicillium wortmannii).